Reading from the N-terminus, the 878-residue chain is Phosphoenolpyruvate carboxylase (878 aa).

Residues His138 and Lys545 contribute to the active site.

It belongs to the PEPCase type 1 family. Mg(2+) is required as a cofactor.

It catalyses the reaction oxaloacetate + phosphate = phosphoenolpyruvate + hydrogencarbonate. Forms oxaloacetate, a four-carbon dicarboxylic acid source for the tricarboxylic acid cycle. This chain is Phosphoenolpyruvate carboxylase, found in Shewanella halifaxensis (strain HAW-EB4).